A 626-amino-acid chain; its full sequence is Hormonally up-regulated neu tumor-associated kinase homolog B (626 aa).

Residues 1–2 and Lys17 each bind ATP; that span reads KV. The Protein kinase domain maps to 1 to 246; sequence KVREGLHVGT…IQQALANRWL (246 aa). Catalysis depends on Asp112, which acts as the Proton acceptor. The span at 336–357 shows a compositional bias: basic and acidic residues; the sequence is KYKMNKNSYEERRSKDLEKRGE. Disordered stretches follow at residues 336–407, 477–574, and 590–615; these read KYKM…ESFG, VNRE…RSRG, and QVVS…PGYA. A compositionally biased stretch (polar residues) spans 374–390; sequence SHRQSTCLTPQGHSSSK. Basic and acidic residues predominate over residues 392–405; it reads PIKERRSSKSERES. Over residues 518-532 the composition is skewed to polar residues; sequence DNTSPLKGHSNQASF. Residues 539 to 555 are compositionally biased toward low complexity; sequence SPSSPESMSPTSPHSPS. Residues 556 to 566 are compositionally biased toward polar residues; it reads CNNNISGNLGS.

The protein belongs to the protein kinase superfamily. CAMK Ser/Thr protein kinase family. SNF1 subfamily. As to expression, in the egg, expressed predominantly in the animal hemisphere. This pattern of expression persists throughout the cleavage and blastula stages. At the gastrula stage, expression is restricted to the ectoderm. In later-stage embryos, expressed over the entire embryonic surface including the open neural plate at stage 15 and the neural tube at stage 22. In tadpoles, strongly expressed in the neural tube, motor neurons, brain regions and sensory organs (otic vesicle and eye). Also expressed in the perisomitic mesoderm, brachial arches and embryonic epidermis of tadpoles.

It carries out the reaction L-seryl-[protein] + ATP = O-phospho-L-seryl-[protein] + ADP + H(+). It catalyses the reaction L-threonyl-[protein] + ATP = O-phospho-L-threonyl-[protein] + ADP + H(+). The polypeptide is Hormonally up-regulated neu tumor-associated kinase homolog B (hunk-b) (Xenopus laevis (African clawed frog)).